The primary structure comprises 329 residues: Glutamine synthetase (329 aa).

The GS beta-grasp domain occupies 4-86 (YKLEYIWLDA…VMCEVMMPDA (83 aa)). The 241-residue stretch at 89-329 (PHASNTRATV…GDPYQMLLSS (241 aa)) folds into the GS catalytic domain. Positions 109 and 111 each coordinate Mg(2+). An ATP-binding site is contributed by Glu-167. Residues Glu-172 and Glu-179 each coordinate Mg(2+). Glu-278 serves as a coordination point for L-glutamate.

The protein belongs to the glutamine synthetase family. In terms of assembly, homooctamer and homotetramer. Requires Mg(2+) as cofactor.

The protein resides in the cytoplasm. It carries out the reaction L-glutamate + NH4(+) + ATP = L-glutamine + ADP + phosphate + H(+). Catalyzes the ATP-dependent biosynthesis of glutamine from glutamate and ammonia. This is Glutamine synthetase from Rhizobium meliloti (Ensifer meliloti).